The sequence spans 349 residues: tRNA pseudouridine synthase D (349 aa).

Substrate is bound at residue Phe26. Asp79 serves as the catalytic Nucleophile. A substrate-binding site is contributed by Asn128. Positions 154–302 (GVPNYFGEQR…VEGCRRAILV (149 aa)) constitute a TRUD domain. Position 328 (Phe328) interacts with substrate.

Belongs to the pseudouridine synthase TruD family.

The catalysed reaction is uridine(13) in tRNA = pseudouridine(13) in tRNA. Functionally, responsible for synthesis of pseudouridine from uracil-13 in transfer RNAs. The sequence is that of tRNA pseudouridine synthase D from Photorhabdus laumondii subsp. laumondii (strain DSM 15139 / CIP 105565 / TT01) (Photorhabdus luminescens subsp. laumondii).